The following is a 583-amino-acid chain: NudC domain-containing protein 1 (583 aa).

The residue at position 8 (Ser8) is a Phosphoserine. A CS domain is found at 273 to 361; that stretch reads IKEPLYYWQQ…NEGLTWPELV (89 aa). Phosphoserine is present on Ser388.

Isoform 1 is specifically expressed in leukemias and a variety of solid tumor cell lines and is also detected in testis and heart. Isoform 2 is predominantly expressed in testis and weakly expressed in tumor cells.

The protein localises to the cytoplasm. Its subcellular location is the nucleus. The polypeptide is NudC domain-containing protein 1 (Homo sapiens (Human)).